The primary structure comprises 248 residues: PF03932 family protein CutC (248 aa).

Belongs to the CutC family. Homodimer.

It is found in the cytoplasm. This Salmonella newport (strain SL254) protein is PF03932 family protein CutC.